The primary structure comprises 85 residues: Large ribosomal subunit protein bL27 (85 aa).

A disordered region spans residues 1–26 (MAHKKAGGSTRNGRDSESKRLGVKRF).

This sequence belongs to the bacterial ribosomal protein bL27 family.

The sequence is that of Large ribosomal subunit protein bL27 from Saccharophagus degradans (strain 2-40 / ATCC 43961 / DSM 17024).